The following is a 330-amino-acid chain: tRNA U34 carboxymethyltransferase (330 aa).

Residues Lys91, Trp105, Lys110, Gly130, 152–154, 181–182, Met196, Tyr200, and Arg315 contribute to the carboxy-S-adenosyl-L-methionine site; these read DPS and IE.

Belongs to the class I-like SAM-binding methyltransferase superfamily. CmoB family. Homotetramer.

It carries out the reaction carboxy-S-adenosyl-L-methionine + 5-hydroxyuridine(34) in tRNA = 5-carboxymethoxyuridine(34) in tRNA + S-adenosyl-L-homocysteine + H(+). Catalyzes carboxymethyl transfer from carboxy-S-adenosyl-L-methionine (Cx-SAM) to 5-hydroxyuridine (ho5U) to form 5-carboxymethoxyuridine (cmo5U) at position 34 in tRNAs. This chain is tRNA U34 carboxymethyltransferase, found in Shewanella denitrificans (strain OS217 / ATCC BAA-1090 / DSM 15013).